We begin with the raw amino-acid sequence, 702 residues long: Polyribonucleotide nucleotidyltransferase (702 aa).

Mg(2+) is bound by residues D493 and D499. One can recognise a KH domain in the interval 559-619; that stretch reads PKVEIFNVDP…NLISQSKEYI (61 aa). Positions 643–702 constitute an S1 motif domain; sequence GEEFLGRVQKVVEFGVFVELKEGVDGLLHNSKIKEKLEVGHEIKVKVAEIKNGKVSLDLA.

Belongs to the polyribonucleotide nucleotidyltransferase family. Mg(2+) is required as a cofactor.

The protein localises to the cytoplasm. The catalysed reaction is RNA(n+1) + phosphate = RNA(n) + a ribonucleoside 5'-diphosphate. In terms of biological role, involved in mRNA degradation. Catalyzes the phosphorolysis of single-stranded polyribonucleotides processively in the 3'- to 5'-direction. The protein is Polyribonucleotide nucleotidyltransferase of Campylobacter lari (strain RM2100 / D67 / ATCC BAA-1060).